A 1377-amino-acid polypeptide reads, in one-letter code: Pleckstrin homology-like domain family B member 1 (1377 aa).

The residue at position 51 (Ser-51) is a Phosphoserine. The region spanning 64-125 (TVIGSAARDI…LTQGCMLCLG (62 aa)) is the FHA domain. Arg-131 carries the asymmetric dimethylarginine modification. The disordered stretch occupies residues 150-187 (RAPGPPYSPVPAESESLVNGNHTPQTATRGPSACASHS). Residues 165–178 (SLVNGNHTPQTATR) show a composition bias toward polar residues. Residues Ser-192, Ser-220, and Ser-223 each carry the phosphoserine modification. Disordered stretches follow at residues 211-334 (AAGK…LTDS) and 370-535 (GALS…GSFS). The span at 252–273 (SPAFSPLSSPASSGSCASHSPS) shows a compositional bias: low complexity. A compositionally biased stretch (polar residues) spans 288-303 (RSSSYHLALQPPQSRP). The segment covering 309–322 (ESPRLSRKGGHERP) has biased composition (basic and acidic residues). Phosphoserine occurs at positions 324, 334, 381, 404, 430, 443, 461, 470, 489, and 501. The segment covering 456–473 (ELPPLSPSLSRRALSPLP) has biased composition (low complexity). Residues 481–491 (KLNREVAESPR) are compositionally biased toward basic and acidic residues. At Arg-512 the chain carries Omega-N-methylarginine. Phosphoserine is present on residues Ser-518 and Ser-520. Position 522 is a phosphothreonine (Thr-522). Phosphoserine occurs at positions 533, 539, 551, 555, 563, 578, and 583. A compositionally biased stretch (low complexity) spans 653-663 (PSRGLAGASGR). 3 disordered regions span residues 653–707 (PSRG…APST), 936–1019 (TGPA…GSLP), and 1119–1138 (SMETSISTGGNSACSPDNMS). A compositionally biased stretch (basic and acidic residues) spans 677 to 691 (ESMERSDEENLKEEC). At Ser-678 the chain carries Phosphoserine. Residues 683-809 (DEENLKEECS…TETKLFEDLE (127 aa)) are a coiled coil. 2 positions are modified to phosphoserine: Ser-971 and Ser-1017. The span at 971-992 (SPLPRTRSGPLPSSSGSSSSSS) shows a compositional bias: low complexity. Residues 1009 to 1018 (LLTQNGTGSL) are compositionally biased toward polar residues. Residues 1144-1208 (DMGKIEEMEK…ARRQQLVEKE (65 aa)) are a coiled coil. Residues 1256–1370 (SKVCRGYLVK…WMDVIVTGAE (115 aa)) form the PH domain.

This is Pleckstrin homology-like domain family B member 1 (PHLDB1) from Homo sapiens (Human).